Reading from the N-terminus, the 117-residue chain is Large ribosomal subunit protein uL18 (117 aa).

The protein belongs to the universal ribosomal protein uL18 family. In terms of assembly, part of the 50S ribosomal subunit; part of the 5S rRNA/L5/L18/L25 subcomplex. Contacts the 5S and 23S rRNAs.

This is one of the proteins that bind and probably mediate the attachment of the 5S RNA into the large ribosomal subunit, where it forms part of the central protuberance. This is Large ribosomal subunit protein uL18 from Alkalilimnicola ehrlichii (strain ATCC BAA-1101 / DSM 17681 / MLHE-1).